The primary structure comprises 395 residues: Elongation factor Tu (395 aa).

The region spanning 10–205 (KPHVNIGTIG…VDSYIPLPPR (196 aa)) is the tr-type G domain. The tract at residues 19 to 26 (GHVDHGKT) is G1. 19-26 (GHVDHGKT) lines the GTP pocket. Threonine 26 is a Mg(2+) binding site. The segment at 60-64 (GITIN) is G2. Positions 81–84 (DCPG) are G3. GTP-binding positions include 81–85 (DCPGH) and 136–139 (NKVD). A G4 region spans residues 136 to 139 (NKVD). The G5 stretch occupies residues 174-176 (SAT).

It belongs to the TRAFAC class translation factor GTPase superfamily. Classic translation factor GTPase family. EF-Tu/EF-1A subfamily. In terms of assembly, monomer.

It is found in the cytoplasm. It catalyses the reaction GTP + H2O = GDP + phosphate + H(+). Functionally, GTP hydrolase that promotes the GTP-dependent binding of aminoacyl-tRNA to the A-site of ribosomes during protein biosynthesis. The polypeptide is Elongation factor Tu (Terrimonas ferruginea (Flavobacterium ferrugineum)).